The following is a 237-amino-acid chain: Uridylate kinase (237 aa).

10-13 (KFSG) lines the ATP pocket. Positions 18-23 (GDSGFG) are involved in allosteric activation by GTP. Glycine 52 provides a ligand contact to UMP. ATP contacts are provided by glycine 53 and arginine 57. UMP contacts are provided by residues aspartate 73 and 134 to 141 (TGNPFFTT). The ATP site is built by threonine 161, tyrosine 167, and aspartate 170.

This sequence belongs to the UMP kinase family. In terms of assembly, homohexamer.

Its subcellular location is the cytoplasm. It carries out the reaction UMP + ATP = UDP + ADP. Its pathway is pyrimidine metabolism; CTP biosynthesis via de novo pathway; UDP from UMP (UMPK route): step 1/1. With respect to regulation, allosterically activated by GTP. Inhibited by UTP. Catalyzes the reversible phosphorylation of UMP to UDP. The chain is Uridylate kinase from Campylobacter hominis (strain ATCC BAA-381 / DSM 21671 / CCUG 45161 / LMG 19568 / NCTC 13146 / CH001A).